The primary structure comprises 488 residues: MSFNHKTIEELHDLLVAKEISATELTQKTLEDIKSREEAVGSFITVSEEAALKQAAAIDAKGIDADNLMSGIPLAVKDNISTKGILTTAASKMLYNYEPIFDATSVANAYAKDMIVIGKTNMDEFAMGGSTETSYFKKTKNAWDHTKVPGGSSGGSATAVASGQVRLSLGSDTGGSIRQPAAFNGVVGLKPTYGTVSRYGLIAFGSSLDQIGPFAPTVKENAQLLNVIASSDVKDATSAPVRIADYTSKIGRDIKGMKIALPKEYLGEGIDPEIKETVLAAAKQFEALGATVEEVSLPHSKYGVAVYYIIASSEASSNLQRFDGIRYGFRADDAKNLDEIYVNTRSQGFGDEVKRRIMLGTFSLSSGYYDAYFKKAGQVRTLIIEDFDKVFADYDLILGPTTPTVAFGLDTLNHDPVAMYLADLLTIPVNLAGLPGISIPAGFVDGLPVGLQLIGPKYTEETIYQAAAAFEAVTDYHKQQPIIFGGDK.

Active-site charge relay system residues include lysine 77 and serine 152. Catalysis depends on serine 176, which acts as the Acyl-ester intermediate.

Belongs to the amidase family. GatA subfamily. Heterotrimer of A, B and C subunits.

It catalyses the reaction L-glutamyl-tRNA(Gln) + L-glutamine + ATP + H2O = L-glutaminyl-tRNA(Gln) + L-glutamate + ADP + phosphate + H(+). In terms of biological role, allows the formation of correctly charged Gln-tRNA(Gln) through the transamidation of misacylated Glu-tRNA(Gln) in organisms which lack glutaminyl-tRNA synthetase. The reaction takes place in the presence of glutamine and ATP through an activated gamma-phospho-Glu-tRNA(Gln). The protein is Glutamyl-tRNA(Gln) amidotransferase subunit A of Streptococcus pyogenes serotype M4 (strain MGAS10750).